The primary structure comprises 1267 residues: Probable cation-transporting ATPase catp-6 (1267 aa).

The Extracellular segment spans residues Met-1 to Arg-32. Residues Thr-33–Trp-53 traverse the membrane as a helical segment. Residues Lys-54–Pro-189 lie on the Cytoplasmic side of the membrane. A helical membrane pass occupies residues Ile-190 to Val-210. Over Thr-211–Glu-217 the chain is Extracellular. The chain crosses the membrane as a helical span at residues Tyr-218 to Tyr-238. Residues Gln-239–Lys-390 are Cytoplasmic-facing. The helical transmembrane segment at Phe-391–Ile-411 threads the bilayer. The Extracellular segment spans residues Met-412 to Ser-424. A helical transmembrane segment spans residues Leu-425–Ile-445. Topologically, residues Asn-446–Met-950 are cytoplasmic. Asp-476 serves as the catalytic 4-aspartylphosphate intermediate. Residues Asp-891 and Asp-895 each contribute to the Mg(2+) site. A helical transmembrane segment spans residues Ala-951–Leu-971. Over Thr-972–Phe-976 the chain is Extracellular. A helical membrane pass occupies residues Met-977–Phe-997. At Tyr-998–Ala-1013 the chain is on the cytoplasmic side. The chain crosses the membrane as a helical span at residues Ser-1014–Phe-1034. At Ser-1035 to Ser-1058 the chain is on the extracellular side. The helical transmembrane segment at Met-1059–Tyr-1079 threads the bilayer. Residues Ser-1080–Ala-1097 lie on the Cytoplasmic side of the membrane. Residues Leu-1098–Leu-1118 traverse the membrane as a helical segment. At Lys-1119–Arg-1132 the chain is on the extracellular side. Residues Ile-1133 to Phe-1153 traverse the membrane as a helical segment. Residues Val-1154–Tyr-1267 lie on the Cytoplasmic side of the membrane. The disordered stretch occupies residues Glu-1232–Glu-1256.

It belongs to the cation transport ATPase (P-type) (TC 3.A.3) family. Type V subfamily.

The protein localises to the membrane. It carries out the reaction ATP + H2O = ADP + phosphate + H(+). This Caenorhabditis elegans protein is Probable cation-transporting ATPase catp-6.